A 450-amino-acid polypeptide reads, in one-letter code: UDP-N-acetylmuramoylalanine--D-glutamate ligase (450 aa).

115 to 121 (GTNGKTT) is an ATP binding site.

It belongs to the MurCDEF family.

The protein resides in the cytoplasm. The catalysed reaction is UDP-N-acetyl-alpha-D-muramoyl-L-alanine + D-glutamate + ATP = UDP-N-acetyl-alpha-D-muramoyl-L-alanyl-D-glutamate + ADP + phosphate + H(+). It functions in the pathway cell wall biogenesis; peptidoglycan biosynthesis. Cell wall formation. Catalyzes the addition of glutamate to the nucleotide precursor UDP-N-acetylmuramoyl-L-alanine (UMA). This Caldanaerobacter subterraneus subsp. tengcongensis (strain DSM 15242 / JCM 11007 / NBRC 100824 / MB4) (Thermoanaerobacter tengcongensis) protein is UDP-N-acetylmuramoylalanine--D-glutamate ligase.